Consider the following 187-residue polypeptide: Thermosensitive gluconokinase (187 aa).

10–17 is a binding site for ATP; that stretch reads GVSGSGKT.

It belongs to the gluconokinase GntK/GntV family.

It catalyses the reaction D-gluconate + ATP = 6-phospho-D-gluconate + ADP + H(+). It functions in the pathway carbohydrate acid metabolism; L-idonate degradation. In Escherichia coli (strain K12), this protein is Thermosensitive gluconokinase (idnK).